The primary structure comprises 408 residues: S-adenosylmethionine synthase (408 aa).

ATP is bound at residue H15. Residue D17 coordinates Mg(2+). E43 is a binding site for K(+). E56 and Q100 together coordinate L-methionine. Positions Q100–E110 are flexible loop. ATP contacts are provided by residues D171–K173, K248–F249, D257, R263–K264, A280, and K284. D257 serves as a coordination point for L-methionine. K288 contacts L-methionine.

This sequence belongs to the AdoMet synthase family. In terms of assembly, homotetramer; dimer of dimers. Mg(2+) serves as cofactor. Requires K(+) as cofactor.

It localises to the cytoplasm. It catalyses the reaction L-methionine + ATP + H2O = S-adenosyl-L-methionine + phosphate + diphosphate. The protein operates within amino-acid biosynthesis; S-adenosyl-L-methionine biosynthesis; S-adenosyl-L-methionine from L-methionine: step 1/1. Catalyzes the formation of S-adenosylmethionine (AdoMet) from methionine and ATP. The overall synthetic reaction is composed of two sequential steps, AdoMet formation and the subsequent tripolyphosphate hydrolysis which occurs prior to release of AdoMet from the enzyme. This chain is S-adenosylmethionine synthase, found in Synechococcus sp. (strain CC9902).